Consider the following 887-residue polypeptide: Cytoplasmic aconitate hydratase (887 aa).

Residues Q84 and 204-206 (DSH) each bind substrate. [4Fe-4S] cluster contacts are provided by C436, C502, and C505. Residues R535, R540, R697, and 777 to 778 (SR) each bind substrate.

This sequence belongs to the aconitase/IPM isomerase family. As to quaternary structure, interacts with gex-3. [4Fe-4S] cluster is required as a cofactor.

The protein localises to the cytoplasm. The protein resides in the cytosol. It carries out the reaction citrate = D-threo-isocitrate. Catalyzes the isomerization of citrate to isocitrate via cis-aconitate. Has probably no RNA-binding activity. This is Cytoplasmic aconitate hydratase (aco-1) from Caenorhabditis elegans.